A 276-amino-acid polypeptide reads, in one-letter code: MYNVKSGKLLPFGVIEGVTRTNVQQKHHFDTLKVDWIAEEVPVALVYNGISHVVMMASPKDLEYFAIGFSLSEGIIESQHEIRSIDIVAHCRGGIELQIELSSRRFAGLKERRRNLAGRTGCGICGAEQLSDIFRPISPLPFTQTFSLNQLDYALSQLTSVQDVGALTGCTHAAGWINPEGKLLGGCEDVGRHVALDKMLGMKAKTGWQQGAVLVSSRASYEMVQKSAICGVEILLAVSAATSLAVEIADRCHLTLVGFCKPGKATIYTHAERLIS.

The Cysteine persulfide intermediate role is filled by Cys122. 259–264 (FCKPGK) serves as a coordination point for Mo-bis(molybdopterin guanine dinucleotide).

The protein belongs to the FdhD family.

It localises to the cytoplasm. In terms of biological role, required for formate dehydrogenase (FDH) activity. Acts as a sulfur carrier protein that transfers sulfur from IscS to the molybdenum cofactor prior to its insertion into FDH. This Photorhabdus laumondii subsp. laumondii (strain DSM 15139 / CIP 105565 / TT01) (Photorhabdus luminescens subsp. laumondii) protein is Sulfur carrier protein FdhD.